The following is a 253-amino-acid chain: MHILLSNDDGIHAPGIQQLAEALRTLAFVQIVAPDRDRSGVSNSLTLDAPLRMQTHPNGDIAILSGTPTDCVYLGVNALMRPGPDIVVSGINAGPNLGDDVIYSGTVAAAMEGRHLGYPALAVSLNGTRHFATAAAVTCRLLRALTSTPLRTGKILNVNVPDLPLSSLKGYKVTRCGSRHPASEVIRQTDPRGREMLWIGPPAGSFDAGADTDFDAVNRGYVSLTPLQVDLTASAALPVLSDWLGDTEGLGSW.

Positions 8, 9, 39, and 92 each coordinate a divalent metal cation.

This sequence belongs to the SurE nucleotidase family. Requires a divalent metal cation as cofactor.

It localises to the cytoplasm. It carries out the reaction a ribonucleoside 5'-phosphate + H2O = a ribonucleoside + phosphate. The enzyme catalyses a ribonucleoside 3'-phosphate + H2O = a ribonucleoside + phosphate. It catalyses the reaction [phosphate](n) + H2O = [phosphate](n-1) + phosphate + H(+). Functionally, nucleotidase with a broad substrate specificity as it can dephosphorylate various ribo- and deoxyribonucleoside 5'-monophosphates and ribonucleoside 3'-monophosphates with highest affinity to 3'-AMP. Also hydrolyzes polyphosphate (exopolyphosphatase activity) with the preference for short-chain-length substrates (P20-25). Might be involved in the regulation of dNTP and NTP pools, and in the turnover of 3'-mononucleotides produced by numerous intracellular RNases (T1, T2, and F) during the degradation of various RNAs. This Sodalis glossinidius (strain morsitans) protein is 5'/3'-nucleotidase SurE.